A 118-amino-acid chain; its full sequence is Large ribosomal subunit protein uL18 (118 aa).

Belongs to the universal ribosomal protein uL18 family. Part of the 50S ribosomal subunit; part of the 5S rRNA/L5/L18/L25 subcomplex. Contacts the 5S and 23S rRNAs.

Functionally, this is one of the proteins that bind and probably mediate the attachment of the 5S RNA into the large ribosomal subunit, where it forms part of the central protuberance. This is Large ribosomal subunit protein uL18 from Limosilactobacillus reuteri (strain DSM 20016) (Lactobacillus reuteri).